The chain runs to 151 residues: Ribosome maturation factor RimP (151 aa).

This sequence belongs to the RimP family.

Its subcellular location is the cytoplasm. Required for maturation of 30S ribosomal subunits. The chain is Ribosome maturation factor RimP from Mannheimia succiniciproducens (strain KCTC 0769BP / MBEL55E).